Reading from the N-terminus, the 348-residue chain is NADH-ubiquinone oxidoreductase chain 2 (348 aa).

The next 9 helical transmembrane spans lie at 1–21 (MSPYITASLLFGLLLGPTITA), 60–80 (FLTQATAAAMLLFASTTNAWL), 96–116 (TLIILALALKIGLAPLHTWLP), 149–169 (NPTLLVILGVLSTLIGGWGGL), 177–194 (ILAYSSIAHLGWMILILQ), 198–220 (TLTLLTLMLYLIMTSSAFLTFIL), 238–258 (ILTSLLPLVLLSLGGLPPLTG), 273–293 (DLAPTATLAALSALLSLYFYL), and 328–348 (MAASSILLLPMTPGILTLFNI).

This sequence belongs to the complex I subunit 2 family.

The protein localises to the mitochondrion inner membrane. It carries out the reaction a ubiquinone + NADH + 5 H(+)(in) = a ubiquinol + NAD(+) + 4 H(+)(out). Its function is as follows. Core subunit of the mitochondrial membrane respiratory chain NADH dehydrogenase (Complex I) that is believed to belong to the minimal assembly required for catalysis. Complex I functions in the transfer of electrons from NADH to the respiratory chain. The immediate electron acceptor for the enzyme is believed to be ubiquinone. The protein is NADH-ubiquinone oxidoreductase chain 2 (MT-ND2) of Tetraodon nigroviridis (Spotted green pufferfish).